We begin with the raw amino-acid sequence, 100 residues long: Large ribosomal subunit protein uL23 (100 aa).

This sequence belongs to the universal ribosomal protein uL23 family. In terms of assembly, part of the 50S ribosomal subunit. Contacts protein L29, and trigger factor when it is bound to the ribosome.

Functionally, one of the early assembly proteins it binds 23S rRNA. One of the proteins that surrounds the polypeptide exit tunnel on the outside of the ribosome. Forms the main docking site for trigger factor binding to the ribosome. This Prochlorococcus marinus (strain MIT 9301) protein is Large ribosomal subunit protein uL23.